The chain runs to 216 residues: 3-isopropylmalate dehydratase small subunit (216 aa).

The protein belongs to the LeuD family. LeuD type 1 subfamily. In terms of assembly, heterodimer of LeuC and LeuD.

The catalysed reaction is (2R,3S)-3-isopropylmalate = (2S)-2-isopropylmalate. Its pathway is amino-acid biosynthesis; L-leucine biosynthesis; L-leucine from 3-methyl-2-oxobutanoate: step 2/4. Catalyzes the isomerization between 2-isopropylmalate and 3-isopropylmalate, via the formation of 2-isopropylmaleate. The chain is 3-isopropylmalate dehydratase small subunit from Psychrobacter sp. (strain PRwf-1).